Consider the following 312-residue polypeptide: Olfactory receptor 2M3 (312 aa).

At 1–25 (MARENSTFNSDFILLGIFNHSPTHT) the chain is on the extracellular side. An N-linked (GlcNAc...) asparagine glycan is attached at asparagine 5. A helical membrane pass occupies residues 26-49 (FLFFLVLAIFSVAFMGNSVMVLLI). The Cytoplasmic segment spans residues 50-57 (YLDTQLHT). The chain crosses the membrane as a helical span at residues 58–79 (PMYLLLSQLSLMDLMLICTTVP). Residues 80 to 100 (KMAFNYLSGSKSISMAGCATQ) lie on the Extracellular side of the membrane. A disulfide bridge links cysteine 97 with cysteine 189. A helical transmembrane segment spans residues 101–120 (IFFYTSLLGSECFLLAVMAY). Residues 121 to 139 (DRYTAICHPLRYTNLMSPK) are Cytoplasmic-facing. Residues 140–158 (ICGLMTAFSWILGSTDGII) traverse the membrane as a helical segment. The Extracellular segment spans residues 159–195 (DVVATFSFSYCGSREIAHFFCDFPSLLILSCSDTSIF). Residues 196–219 (EKILFICCIVMIVFPVAIIIASYA) traverse the membrane as a helical segment. The Cytoplasmic portion of the chain corresponds to 220–236 (RVILAVIHMGSGEGRRK). A helical membrane pass occupies residues 237-259 (AFTTCSSHLLVVGMYYGAALFMY). At 260–272 (IRPTSDRSPTQDK) the chain is on the extracellular side. A helical membrane pass occupies residues 273–292 (MVSVFYTILTPMLNPLIYSL). Over 293–312 (RNKEVTRAFMKILGKGKSGE) the chain is Cytoplasmic.

It belongs to the G-protein coupled receptor 1 family.

The protein localises to the cell membrane. In terms of biological role, odorant receptor. In Homo sapiens (Human), this protein is Olfactory receptor 2M3 (OR2M3).